A 397-amino-acid polypeptide reads, in one-letter code: 3-ketoacyl-CoA thiolase, mitochondrial (397 aa).

Residues Met-1–Pro-16 constitute a mitochondrion; not cleaved transit peptide. Lys-25 is subject to N6-acetyllysine; alternate. Lys-25 carries the N6-succinyllysine; alternate modification. Residue Lys-45 is modified to N6-succinyllysine. Residue Cys-92 is the Acyl-thioester intermediate of the active site. A Phosphothreonine modification is found at Thr-119. Phosphoserine is present on Ser-121. The residue at position 127 (Tyr-127) is a Phosphotyrosine. Thr-136 carries the post-translational modification Phosphothreonine. Residue Lys-137 is modified to N6-acetyllysine; alternate. The residue at position 137 (Lys-137) is an N6-succinyllysine; alternate. Residue Ser-140 is modified to Phosphoserine. Lys-143, Lys-171, Lys-191, and Lys-209 each carry N6-acetyllysine; alternate. N6-succinyllysine; alternate occurs at positions 143, 171, 191, and 209. Lys-211, Lys-212, and Lys-214 each carry N6-succinyllysine. The CoA site is built by Arg-224 and Thr-227. Lys-234 bears the N6-acetyllysine; alternate mark. At Lys-234 the chain carries N6-succinyllysine; alternate. Lys-240 is modified (N6-succinyllysine). Lys-241 is subject to N6-acetyllysine. Ser-251 is a CoA binding site. Residues Lys-269 and Lys-270 each carry the N6-acetyllysine modification. An N6-acetyllysine; alternate modification is found at Lys-305. An N6-succinyllysine; alternate modification is found at Lys-305. Residue Ser-310 is modified to Phosphoserine. An N6-acetyllysine; alternate modification is found at Lys-312. Residue Lys-312 is modified to N6-succinyllysine; alternate. Position 333 is a phosphoserine (Ser-333). Residues Lys-340 and Lys-375 each carry the N6-acetyllysine modification. Cys-382 (proton donor/acceptor) is an active-site residue.

It belongs to the thiolase-like superfamily. Thiolase family. In terms of assembly, homotetramer. Interacts with BNIP3.

The protein localises to the mitochondrion. It carries out the reaction an acyl-CoA + acetyl-CoA = a 3-oxoacyl-CoA + CoA. The enzyme catalyses 2 acetyl-CoA = acetoacetyl-CoA + CoA. The catalysed reaction is acetyl-CoA + H2O = acetate + CoA + H(+). It catalyses the reaction propanoyl-CoA + H2O = propanoate + CoA + H(+). It carries out the reaction butanoyl-CoA + H2O = butanoate + CoA + H(+). The enzyme catalyses hexanoyl-CoA + H2O = hexanoate + CoA + H(+). The catalysed reaction is octanoyl-CoA + H2O = octanoate + CoA + H(+). It catalyses the reaction decanoyl-CoA + H2O = decanoate + CoA + H(+). It carries out the reaction dodecanoyl-CoA + H2O = dodecanoate + CoA + H(+). The enzyme catalyses tetradecanoyl-CoA + H2O = tetradecanoate + CoA + H(+). The catalysed reaction is hexadecanoyl-CoA + H2O = hexadecanoate + CoA + H(+). It functions in the pathway lipid metabolism; fatty acid beta-oxidation. Its function is as follows. In the production of energy from fats, this is one of the enzymes that catalyzes the last step of the mitochondrial beta-oxidation pathway, an aerobic process breaking down fatty acids into acetyl-CoA. Using free coenzyme A/CoA, catalyzes the thiolytic cleavage of medium- to long-chain unbranched 3-oxoacyl-CoAs into acetyl-CoA and a fatty acyl-CoA shortened by two carbon atoms. Also catalyzes the condensation of two acetyl-CoA molecules into acetoacetyl-CoA and could be involved in the production of ketone bodies. Also displays hydrolase activity on various fatty acyl-CoAs. Thereby, could be responsible for the production of acetate in a side reaction to beta-oxidation. Abolishes BNIP3-mediated apoptosis and mitochondrial damage. This is 3-ketoacyl-CoA thiolase, mitochondrial (ACAA2) from Homo sapiens (Human).